We begin with the raw amino-acid sequence, 546 residues long: DNA ligase (546 aa).

Position 244 (Glu244) interacts with ATP. Residue Lys246 is the N6-AMP-lysine intermediate of the active site. ATP-binding residues include Arg251, Arg266, Glu295, Phe334, Arg405, and Lys411.

The protein belongs to the ATP-dependent DNA ligase family. Mg(2+) is required as a cofactor.

It carries out the reaction ATP + (deoxyribonucleotide)n-3'-hydroxyl + 5'-phospho-(deoxyribonucleotide)m = (deoxyribonucleotide)n+m + AMP + diphosphate.. Its function is as follows. DNA ligase that seals nicks in double-stranded DNA during DNA replication, DNA recombination and DNA repair. This chain is DNA ligase, found in Methanocorpusculum labreanum (strain ATCC 43576 / DSM 4855 / Z).